We begin with the raw amino-acid sequence, 358 residues long: Dynein axonemal assembly factor 10 (358 aa).

WD repeat units lie at residues 63–105 (EKKH…QPVF), 109–154 (AHAS…APVA), 162–205 (NNVR…VRWE), 207–249 (NVRN…PKKG), 258–298 (TAGA…QRKV), and 320–358 (ISTQPVAGFDWSPDKEGLFACVAFDQAVRVGIVTKLNKV).

Interacts with PIH1D1; the interaction associates DNAAF10 with the R2TP complex. Interacts with several dynein axonemal assembly factors.

The protein localises to the dynein axonemal particle. Functionally, key assembly factor specifically required for the stability of axonemal dynein heavy chains in cytoplasm. The polypeptide is Dynein axonemal assembly factor 10 (dnaaf10) (Chlamydomonas reinhardtii (Chlamydomonas smithii)).